A 63-amino-acid polypeptide reads, in one-letter code: Large ribosomal subunit protein bL28c (63 aa).

Belongs to the bacterial ribosomal protein bL28 family.

Its subcellular location is the plastid. The protein localises to the chloroplast. The chain is Large ribosomal subunit protein bL28c from Pyropia yezoensis (Susabi-nori).